A 479-amino-acid chain; its full sequence is Glutamate--tRNA ligase (479 aa).

Positions Pro-9 to Thr-19 match the 'HIGH' region motif. Residues Lys-248–Arg-252 carry the 'KMSKS' region motif. Lys-251 serves as a coordination point for ATP.

This sequence belongs to the class-I aminoacyl-tRNA synthetase family. Glutamate--tRNA ligase type 1 subfamily. As to quaternary structure, monomer.

The protein resides in the cytoplasm. It carries out the reaction tRNA(Glu) + L-glutamate + ATP = L-glutamyl-tRNA(Glu) + AMP + diphosphate. Functionally, catalyzes the attachment of glutamate to tRNA(Glu) in a two-step reaction: glutamate is first activated by ATP to form Glu-AMP and then transferred to the acceptor end of tRNA(Glu). In Prochlorococcus marinus (strain MIT 9215), this protein is Glutamate--tRNA ligase.